A 189-amino-acid chain; its full sequence is uncharacterized protein (189 aa).

Over residues 105 to 115 the composition is skewed to basic and acidic residues; sequence EKLEKEEESKT. The interval 105–189 is disordered; it reads EKLEKEEESK…TDDEKTEVST (85 aa). The span at 116-136 shows a compositional bias: basic residues; sequence AKKRAKRLRQKAAAKKRKLTK. Positions 141–151 are enriched in acidic residues; the sequence is SDESSSDDSDS. The span at 161–177 shows a compositional bias: basic and acidic residues; that stretch reads SEGKQNTEVEDKDKVEK. Over residues 178–189 the composition is skewed to acidic residues; it reads EETDDEKTEVST.

This is an uncharacterized protein from Caenorhabditis elegans.